The sequence spans 489 residues: Cysteine--tRNA ligase (489 aa).

Cysteine 27 contacts Zn(2+). A 'HIGH' region motif is present at residues 29-39 (VTVYDLCHLGH). The Zn(2+) site is built by cysteine 211, histidine 236, and glutamate 240. Positions 268–272 (KMSKS) match the 'KMSKS' region motif. Lysine 271 provides a ligand contact to ATP.

Belongs to the class-I aminoacyl-tRNA synthetase family. In terms of assembly, monomer. Zn(2+) is required as a cofactor.

The protein localises to the cytoplasm. It carries out the reaction tRNA(Cys) + L-cysteine + ATP = L-cysteinyl-tRNA(Cys) + AMP + diphosphate. The protein is Cysteine--tRNA ligase of Prochlorococcus marinus (strain MIT 9215).